Consider the following 283-residue polypeptide: Elongation factor Ts (283 aa).

The interval 80–83 (TDFV) is involved in Mg(2+) ion dislocation from EF-Tu.

Belongs to the EF-Ts family.

It localises to the cytoplasm. In terms of biological role, associates with the EF-Tu.GDP complex and induces the exchange of GDP to GTP. It remains bound to the aminoacyl-tRNA.EF-Tu.GTP complex up to the GTP hydrolysis stage on the ribosome. This is Elongation factor Ts from Actinobacillus pleuropneumoniae serotype 3 (strain JL03).